The chain runs to 29 residues: Galanin (29 aa).

At threonine 29 the chain carries Threonine amide.

It belongs to the galanin family.

The protein resides in the secreted. Its function is as follows. Contracts smooth muscle of the gastrointestinal and genitourinary tract, regulates growth hormone release, modulates insulin release, and may be involved in the control of adrenal secretion. This Gallus gallus (Chicken) protein is Galanin (GAL).